Consider the following 157-residue polypeptide: MSDDNQTKLEAADIQALLAVLPHRYPFLLIDRIVDIDGDVSATGIKNVTINEPHFTGHFPENPIMPGVLIVEAMAQTAGAISLLQRKTGRPGVVYFMTIDNAKFRRPVVPGDRLLLHVKKIKQRANISKYECVAEVDGVKVAEAEVAAMISVADENL.

H58 is an active-site residue.

This sequence belongs to the thioester dehydratase family. FabZ subfamily.

It localises to the cytoplasm. The enzyme catalyses a (3R)-hydroxyacyl-[ACP] = a (2E)-enoyl-[ACP] + H2O. In terms of biological role, involved in unsaturated fatty acids biosynthesis. Catalyzes the dehydration of short chain beta-hydroxyacyl-ACPs and long chain saturated and unsaturated beta-hydroxyacyl-ACPs. The sequence is that of 3-hydroxyacyl-[acyl-carrier-protein] dehydratase FabZ from Brucella ovis (strain ATCC 25840 / 63/290 / NCTC 10512).